Here is a 346-residue protein sequence, read N- to C-terminus: Endosome-associated-trafficking regulator 1 (346 aa).

A compositionally biased stretch (polar residues) spans 46 to 67 (FVSSNSKRAFSKDSNQSTTQFR). Disordered stretches follow at residues 46–77 (FVSS…DGNL), 93–129 (LQED…GDES), and 153–173 (SPPA…SDSE). A coiled-coil region spans residues 170-317 (SDSEEGLRLL…SGAQSSIKQL (148 aa)).

The protein belongs to the ENTR1 family.

Its subcellular location is the cytoplasm. It is found in the early endosome. It localises to the endosome. The protein localises to the recycling endosome. The protein resides in the midbody. Its subcellular location is the cytoskeleton. It is found in the microtubule organizing center. It localises to the centrosome. The protein localises to the cilium basal body. Endosome-associated protein that plays a role in membrane receptor sorting, cytokinesis and ciliogenesis. The chain is Endosome-associated-trafficking regulator 1 from Xenopus tropicalis (Western clawed frog).